A 1464-amino-acid polypeptide reads, in one-letter code: Gag-Pol polyprotein (1464 aa).

Gly-2 carries N-myristoyl glycine; by host lipidation. Positions 7–31 (VLRGKKADELEKIRLRPSGKKKYRL) are interaction with Gp41. Positions 16–22 (LEKIRLR) match the Nuclear export signal motif. A Nuclear localization signal motif is present at residues 26-32 (KKKYRLK). The disordered stretch occupies residues 108–146 (LGAETGTAEKMPSTSRPTAPPSGRGRNFPVQQTGGGNYI). Residues 192-229 (NCVGDHQAAMQIIREIINDEAADWDAQHPIPGPLPAGQ) form an interaction with human PPIA/CYPA and NUP153 region. The tract at residues 280 to 366 (YNPTNILDVK…GGPGQKARLM (87 aa)) is dimerization/Multimerization of capsid protein p24. CCHC-type zinc fingers lie at residues 390 to 407 (IRCW…QCRA) and 411 to 428 (QGCW…KCPE). Residues 434 to 509 (LRDGSMGKEA…GKSTSQRGDR (76 aa)) are disordered. The segment covering 459-468 (STPSRSSSGS) has biased composition (low complexity). Residues 477–492 (ERAEGAEGETIQRGDG) are compositionally biased toward basic and acidic residues. Residues 514 to 518 (PQFSL) are dimerization of protease. Positions 533–602 (VEVLLDTGAD…TPINIFGRNI (70 aa)) constitute a Peptidase A2 domain. The For protease activity; shared with dimeric partner role is filled by Asp-538. 2 dimerization of protease regions span residues 562–568 (GIGGFIN) and 601–613 (NILT…LNLP). Residues 656-846 (EGQLEEAPPT…PPLQWMGYEL (191 aa)) enclose the Reverse transcriptase domain. Residues Asp-722, Asp-797, and Asp-798 each coordinate Mg(2+). The segment at 839-847 (LQWMGYELW) is RT 'primer grip'. The Tryptophan repeat motif motif lies at 1009–1025 (WEQWWDNYWQVTWIPEW). Residues 1045–1168 (IPGAETFYTD…VDHLVSQGIR (124 aa)) form the RNase H type-1 domain. Residues Asp-1054, Glu-1089, Asp-1109, and Asp-1160 each contribute to the Mg(2+) site. An Integrase-type zinc finger spans residues 1174–1215 (ERIEPAQEEHEKYHSNMKELTHKFGIPQLVARQIVNTCAQCQ). Positions 1183, 1187, 1211, and 1214 each coordinate Zn(2+). Residues 1224-1375 (QVNAEIGVWQ…TPAERLINMI (152 aa)) form the Integrase catalytic domain. Residues Asp-1235, Asp-1287, and Glu-1323 each contribute to the Mg(2+) site. Residues 1394–1441 (FQVYYREGRDQLWKGPGELLWKGDGAVIVKVGADIKVIPRRKAKIIRD) constitute a DNA-binding region (integrase-type).

In terms of assembly, homotrimer; further assembles as hexamers of trimers. Interacts with gp41 (via C-terminus). Interacts with host CALM1; this interaction induces a conformational change in the Matrix protein, triggering exposure of the myristate group. Interacts with host AP3D1; this interaction allows the polyprotein trafficking to multivesicular bodies during virus assembly. Part of the pre-integration complex (PIC) which is composed of viral genome, matrix protein, Vpr and integrase. Homodimer; the homodimer further multimerizes as homohexamers or homopentamers. Interacts with human PPIA/CYPA. Interacts with human NUP153. Interacts with host PDZD8; this interaction stabilizes the capsid. Interacts with monkey TRIM5; this interaction destabilizes the capsid. As to quaternary structure, homodimer, whose active site consists of two apposed aspartic acid residues. In terms of assembly, heterodimer of p66 RT and p51 RT (RT p66/p51). Heterodimerization of RT is essential for DNA polymerase activity. The overall folding of the subdomains is similar in p66 RT and p51 RT but the spatial arrangements of the subdomains are dramatically different. Homotetramer; may further associate as a homohexadecamer. Part of the pre-integration complex (PIC) which is composed of viral genome, matrix protein, Vpr and integrase. Interacts with human SMARCB1/INI1 and human PSIP1/LEDGF isoform 1. Interacts with human KPNA3; this interaction might play a role in nuclear import of the pre-integration complex. Interacts with human NUP153; this interaction might play a role in nuclear import of the pre-integration complex. It depends on Mg(2+) as a cofactor. In terms of processing, specific enzymatic cleavages by the viral protease yield mature proteins. The protease is released by autocatalytic cleavage. The polyprotein is cleaved during and after budding, this process is termed maturation. Proteolytic cleavage of p66 RT removes the RNase H domain to yield the p51 RT subunit. Nucleocapsid protein p7 might be further cleaved after virus entry.

Its subcellular location is the host cell membrane. It localises to the host endosome. The protein localises to the host multivesicular body. The protein resides in the virion membrane. It is found in the host nucleus. Its subcellular location is the host cytoplasm. It localises to the virion. It carries out the reaction Endopeptidase for which the P1 residue is preferably hydrophobic.. The enzyme catalyses Endohydrolysis of RNA in RNA/DNA hybrids. Three different cleavage modes: 1. sequence-specific internal cleavage of RNA. Human immunodeficiency virus type 1 and Moloney murine leukemia virus enzymes prefer to cleave the RNA strand one nucleotide away from the RNA-DNA junction. 2. RNA 5'-end directed cleavage 13-19 nucleotides from the RNA end. 3. DNA 3'-end directed cleavage 15-20 nucleotides away from the primer terminus.. The catalysed reaction is 3'-end directed exonucleolytic cleavage of viral RNA-DNA hybrid.. It catalyses the reaction DNA(n) + a 2'-deoxyribonucleoside 5'-triphosphate = DNA(n+1) + diphosphate. Its activity is regulated as follows. Protease: The viral protease is inhibited by many synthetic protease inhibitors (PIs), such as amprenavir, atazanavir, indinavir, loprinavir, nelfinavir, ritonavir and saquinavir. Use of protease inhibitors in tritherapy regimens permit more ambitious therapeutic strategies. Reverse transcriptase/ribonuclease H: RT can be inhibited either by nucleoside RT inhibitors (NRTIs) or by non nucleoside RT inhibitors (NNRTIs). NRTIs act as chain terminators, whereas NNRTIs inhibit DNA polymerization by binding a small hydrophobic pocket near the RT active site and inducing an allosteric change in this region. Classical NRTIs are abacavir, adefovir (PMEA), didanosine (ddI), lamivudine (3TC), stavudine (d4T), tenofovir (PMPA), zalcitabine (ddC), and zidovudine (AZT). Classical NNRTIs are atevirdine (BHAP U-87201E), delavirdine, efavirenz (DMP-266), emivirine (I-EBU), and nevirapine (BI-RG-587). The tritherapies used as a basic effective treatment of AIDS associate two NRTIs and one NNRTI. Functionally, mediates, with Gag polyprotein, the essential events in virion assembly, including binding the plasma membrane, making the protein-protein interactions necessary to create spherical particles, recruiting the viral Env proteins, and packaging the genomic RNA via direct interactions with the RNA packaging sequence (Psi). Gag-Pol polyprotein may regulate its own translation, by the binding genomic RNA in the 5'-UTR. At low concentration, the polyprotein would promote translation, whereas at high concentration, the polyprotein would encapsidate genomic RNA and then shut off translation. Its function is as follows. Targets the polyprotein to the plasma membrane via a multipartite membrane-binding signal, that includes its myristoylated N-terminus. Matrix protein is part of the pre-integration complex. Implicated in the release from host cell mediated by Vpu. Binds to RNA. In terms of biological role, forms the conical core that encapsulates the genomic RNA-nucleocapsid complex in the virion. Most core are conical, with only 7% tubular. The core is constituted by capsid protein hexamer subunits. The core is disassembled soon after virion entry. Host restriction factors such as TRIM5-alpha or TRIMCyp bind retroviral capsids and cause premature capsid disassembly, leading to blocks in reverse transcription. Capsid restriction by TRIM5 is one of the factors which restricts HIV-1 to the human species. Host PIN1 apparently facilitates the virion uncoating. On the other hand, interactions with PDZD8 or CYPA stabilize the capsid. Encapsulates and protects viral dimeric unspliced genomic RNA (gRNA). Binds these RNAs through its zinc fingers. Acts as a nucleic acid chaperone which is involved in rearangement of nucleic acid secondary structure during gRNA retrotranscription. Also facilitates template switch leading to recombination. As part of the polyprotein, participates in gRNA dimerization, packaging, tRNA incorporation and virion assembly. Functionally, aspartyl protease that mediates proteolytic cleavages of Gag and Gag-Pol polyproteins during or shortly after the release of the virion from the plasma membrane. Cleavages take place as an ordered, step-wise cascade to yield mature proteins. This process is called maturation. Displays maximal activity during the budding process just prior to particle release from the cell. Also cleaves Nef and Vif, probably concomitantly with viral structural proteins on maturation of virus particles. Hydrolyzes host EIF4GI and PABP1 in order to shut off the capped cellular mRNA translation. The resulting inhibition of cellular protein synthesis serves to ensure maximal viral gene expression and to evade host immune response. Its function is as follows. Multifunctional enzyme that converts the viral RNA genome into dsDNA in the cytoplasm, shortly after virus entry into the cell. This enzyme displays a DNA polymerase activity that can copy either DNA or RNA templates, and a ribonuclease H (RNase H) activity that cleaves the RNA strand of RNA-DNA heteroduplexes in a partially processive 3' to 5' endonucleasic mode. Conversion of viral genomic RNA into dsDNA requires many steps. A tRNA(3)-Lys binds to the primer-binding site (PBS) situated at the 5'-end of the viral RNA. RT uses the 3' end of the tRNA primer to perform a short round of RNA-dependent minus-strand DNA synthesis. The reading proceeds through the U5 region and ends after the repeated (R) region which is present at both ends of viral RNA. The portion of the RNA-DNA heteroduplex is digested by the RNase H, resulting in a ssDNA product attached to the tRNA primer. This ssDNA/tRNA hybridizes with the identical R region situated at the 3' end of viral RNA. This template exchange, known as minus-strand DNA strong stop transfer, can be either intra- or intermolecular. RT uses the 3' end of this newly synthesized short ssDNA to perform the RNA-dependent minus-strand DNA synthesis of the whole template. RNase H digests the RNA template except for two polypurine tracts (PPTs) situated at the 5'-end and near the center of the genome. It is not clear if both polymerase and RNase H activities are simultaneous. RNase H probably can proceed both in a polymerase-dependent (RNA cut into small fragments by the same RT performing DNA synthesis) and a polymerase-independent mode (cleavage of remaining RNA fragments by free RTs). Secondly, RT performs DNA-directed plus-strand DNA synthesis using the PPTs that have not been removed by RNase H as primers. PPTs and tRNA primers are then removed by RNase H. The 3' and 5' ssDNA PBS regions hybridize to form a circular dsDNA intermediate. Strand displacement synthesis by RT to the PBS and PPT ends produces a blunt ended, linear dsDNA copy of the viral genome that includes long terminal repeats (LTRs) at both ends. In terms of biological role, catalyzes viral DNA integration into the host chromosome, by performing a series of DNA cutting and joining reactions. This enzyme activity takes place after virion entry into a cell and reverse transcription of the RNA genome in dsDNA. The first step in the integration process is 3' processing. This step requires a complex comprising the viral genome, matrix protein, Vpr and integrase. This complex is called the pre-integration complex (PIC). The integrase protein removes 2 nucleotides from each 3' end of the viral DNA, leaving recessed CA OH's at the 3' ends. In the second step, the PIC enters cell nucleus. This process is mediated through integrase and Vpr proteins, and allows the virus to infect a non dividing cell. This ability to enter the nucleus is specific of lentiviruses, other retroviruses cannot and rely on cell division to access cell chromosomes. In the third step, termed strand transfer, the integrase protein joins the previously processed 3' ends to the 5' ends of strands of target cellular DNA at the site of integration. The 5'-ends are produced by integrase-catalyzed staggered cuts, 5 bp apart. A Y-shaped, gapped, recombination intermediate results, with the 5'-ends of the viral DNA strands and the 3' ends of target DNA strands remaining unjoined, flanking a gap of 5 bp. The last step is viral DNA integration into host chromosome. This involves host DNA repair synthesis in which the 5 bp gaps between the unjoined strands are filled in and then ligated. Since this process occurs at both cuts flanking the HIV genome, a 5 bp duplication of host DNA is produced at the ends of HIV-1 integration. Alternatively, Integrase may catalyze the excision of viral DNA just after strand transfer, this is termed disintegration. This is Gag-Pol polyprotein (gag-pol) from Homo sapiens (Human).